The sequence spans 163 residues: Cytochrome c-type biogenesis protein CcmE (163 aa).

Residues 1–8 (MNPRRKKR) lie on the Cytoplasmic side of the membrane. A helical; Signal-anchor for type II membrane protein membrane pass occupies residues 9-29 (LTLAVALIVGVAGAASLLLYA). Residues 30-163 (LNSNLNLFYT…QEGVEKTAQY (134 aa)) are Periplasmic-facing. Heme is bound by residues His-131 and Tyr-135.

The protein belongs to the CcmE/CycJ family.

Its subcellular location is the cell inner membrane. Heme chaperone required for the biogenesis of c-type cytochromes. Transiently binds heme delivered by CcmC and transfers the heme to apo-cytochromes in a process facilitated by CcmF and CcmH. In Shewanella denitrificans (strain OS217 / ATCC BAA-1090 / DSM 15013), this protein is Cytochrome c-type biogenesis protein CcmE.